The chain runs to 516 residues: Probable 2-methylcitrate dehydratase (516 aa).

Belongs to the PrpD family.

It carries out the reaction (2S,3S)-2-methylcitrate = 2-methyl-cis-aconitate + H2O. It participates in organic acid metabolism; propanoate degradation. Functionally, catalyzes the stereospecific dehydration of (2S,3S)-2-methylcitrate (2-MC) to yield the cis isomer of 2-methyl-aconitate. The polypeptide is Probable 2-methylcitrate dehydratase (PDH1) (Saccharomyces cerevisiae (strain ATCC 204508 / S288c) (Baker's yeast)).